A 375-amino-acid polypeptide reads, in one-letter code: Succinyl-diaminopimelate desuccinylase (375 aa).

His66 contacts Zn(2+). Asp68 is an active-site residue. Asp99 is a binding site for Zn(2+). The active-site Proton acceptor is the Glu130. The Zn(2+) site is built by Glu131, Glu159, and His345.

The protein belongs to the peptidase M20A family. DapE subfamily. In terms of assembly, homodimer. Zn(2+) is required as a cofactor. Co(2+) serves as cofactor.

It carries out the reaction N-succinyl-(2S,6S)-2,6-diaminopimelate + H2O = (2S,6S)-2,6-diaminopimelate + succinate. Its pathway is amino-acid biosynthesis; L-lysine biosynthesis via DAP pathway; LL-2,6-diaminopimelate from (S)-tetrahydrodipicolinate (succinylase route): step 3/3. In terms of biological role, catalyzes the hydrolysis of N-succinyl-L,L-diaminopimelic acid (SDAP), forming succinate and LL-2,6-diaminopimelate (DAP), an intermediate involved in the bacterial biosynthesis of lysine and meso-diaminopimelic acid, an essential component of bacterial cell walls. This chain is Succinyl-diaminopimelate desuccinylase, found in Xanthobacter autotrophicus (strain ATCC BAA-1158 / Py2).